A 357-amino-acid chain; its full sequence is Sulfate/thiosulfate import ATP-binding protein CysA (357 aa).

Residues 3–237 (IQIQGVSKQY…PASPFVYDFL (235 aa)) enclose the ABC transporter domain. 35–42 (GPSGSGKT) contributes to the ATP binding site.

Belongs to the ABC transporter superfamily. Sulfate/tungstate importer (TC 3.A.1.6) family. In terms of assembly, the complex is composed of two ATP-binding proteins (CysA), two transmembrane proteins (CysT and CysW) and a solute-binding protein (CysP).

It is found in the cell membrane. It catalyses the reaction sulfate(out) + ATP + H2O = sulfate(in) + ADP + phosphate + H(+). The catalysed reaction is thiosulfate(out) + ATP + H2O = thiosulfate(in) + ADP + phosphate + H(+). Its function is as follows. Part of the ABC transporter complex CysAWTP involved in sulfate/thiosulfate import. Responsible for energy coupling to the transport system. In Bacillus cereus (strain ATCC 14579 / DSM 31 / CCUG 7414 / JCM 2152 / NBRC 15305 / NCIMB 9373 / NCTC 2599 / NRRL B-3711), this protein is Sulfate/thiosulfate import ATP-binding protein CysA.